The sequence spans 165 residues: MAKMTLSSYMLMLAFSLFSQGILLSASKSIRNLEDDIVFNTFRMGKAFQKEDTAERSVVAPSLEQYKNDESGFMNDDDNKNSKNTGSKQNLVTHGLPLSLAVKPYLALKGSVAFPAENGVQNAESTQEKREIGDEENSAKFPIGRRDFDMLRCMLGRVYRPCWQV.

Residues 1–21 (MAKMTLSSYMLMLAFSLFSQG) form the signal peptide. A disordered region spans residues 66 to 89 (YKNDESGFMNDDDNKNSKNTGSKQ). At Ile143 the chain carries Isoleucine amide. Cysteines 153 and 162 form a disulfide.

It belongs to the MCH family. In terms of processing, pro-MCH is processed differentially in the brain and in peripheral organs producing two neuropeptides; NEI and MCH. A third peptide, NGE, may also be produced. Preferential processing in neurons by prohormone convertase 2 (PC2) generates NEI. MCH is generated in neurons of the lateral hypothalmic area by several prohormone convertases including PC1/3, PC2 and PC5/6. Predominantly expressed in hypothalamus. Also found in heart, intestine, spleen and testis (spermatogonia, early spermatocytes and Sertoli cells). In brain only mature MCH and NEI peptides are present. In peripheral tissues a large product, encompassing the NEI and MCH domains of the precursor, is found predominantly.

It is found in the secreted. Its function is as follows. MCH may act as a neurotransmitter or neuromodulator in a broad array of neuronal functions directed toward the regulation of goal-directed behavior, such as food intake, and general arousal. The sequence is that of Pro-MCH (Pmch) from Mus musculus (Mouse).